The sequence spans 200 residues: MSGFQQHTGLVVPLDAANVDTDAIIPKQFLQKVNRTGFGKHLFHDWRFLDDAGEKANPEFVMNQPRYQDASILLARENFGCGSSREHAPWALADYGIRVMIAPSFADIFYGNSINNQMVPVRLTEQEVDELFTYVHDTEGATITVDLEALSVTANGKTYHFEIDDFRRHCLLNGLDNIGLTLQHEAKIAEYEAKIPSFLK.

The protein belongs to the LeuD family. LeuD type 1 subfamily. In terms of assembly, heterodimer of LeuC and LeuD.

It carries out the reaction (2R,3S)-3-isopropylmalate = (2S)-2-isopropylmalate. The protein operates within amino-acid biosynthesis; L-leucine biosynthesis; L-leucine from 3-methyl-2-oxobutanoate: step 2/4. In terms of biological role, catalyzes the isomerization between 2-isopropylmalate and 3-isopropylmalate, via the formation of 2-isopropylmaleate. This Vibrio cholerae serotype O1 (strain ATCC 39541 / Classical Ogawa 395 / O395) protein is 3-isopropylmalate dehydratase small subunit.